A 328-amino-acid polypeptide reads, in one-letter code: NAD(P)H-dependent pentose reductase (328 aa).

Tyr-50 acts as the Proton donor in catalysis. Residue His-112 participates in substrate binding. Residues 174 to 175 (AN), 223 to 232 (SSFGPQSFVE), and 279 to 289 (KSNNVDRLKQN) contribute to the NAD(+) site.

The protein belongs to the aldo/keto reductase family.

Functionally, pentose reductase with a broad substrate affinity involved in pentose catabolism. Has highest reductase activities with L-arabinose and D-xylose as substrates, and displays much lower activities with D-ribose, D-galactose and D-glucose. Has highest dehydrogenase activity with L-arabitol as substrate, followed by xylitol and D-sorbitol. May be responsible for the first step of the L-arabinose catabolic pathway. This chain is NAD(P)H-dependent pentose reductase (PRD1), found in Pyricularia oryzae (strain 70-15 / ATCC MYA-4617 / FGSC 8958) (Rice blast fungus).